We begin with the raw amino-acid sequence, 475 residues long: tRNA-2-methylthio-N(6)-dimethylallyladenosine synthase (475 aa).

The tract at residues 1–21 is disordered; sequence MTTAPTSPALPASSDTAPTGP. The MTTase N-terminal domain occupies 24 to 145; that stretch reads RGLHVITWGC…LPEMVARAAR (122 aa). Residues Cys33, Cys69, Cys108, Cys186, Cys190, and Cys193 each coordinate [4Fe-4S] cluster. The region spanning 172–404 is the Radical SAM core domain; it reads TQGNLTAFLT…QALLREQQDA (233 aa). The TRAM domain maps to 407 to 469; sequence ADMVGTVQEI…TNSLGGTLIR (63 aa).

The protein belongs to the methylthiotransferase family. MiaB subfamily. Monomer. It depends on [4Fe-4S] cluster as a cofactor.

Its subcellular location is the cytoplasm. It catalyses the reaction N(6)-dimethylallyladenosine(37) in tRNA + (sulfur carrier)-SH + AH2 + 2 S-adenosyl-L-methionine = 2-methylsulfanyl-N(6)-dimethylallyladenosine(37) in tRNA + (sulfur carrier)-H + 5'-deoxyadenosine + L-methionine + A + S-adenosyl-L-homocysteine + 2 H(+). Catalyzes the methylthiolation of N6-(dimethylallyl)adenosine (i(6)A), leading to the formation of 2-methylthio-N6-(dimethylallyl)adenosine (ms(2)i(6)A) at position 37 in tRNAs that read codons beginning with uridine. This Gluconobacter oxydans (strain 621H) (Gluconobacter suboxydans) protein is tRNA-2-methylthio-N(6)-dimethylallyladenosine synthase.